We begin with the raw amino-acid sequence, 335 residues long: MLKLEPEFPGLPQRCDSCRSAPCAFYCLADSAALCATCDADVHSVNPLARRHRRVPMGVVAAPGAGGAFVVRPAGGVNSSWPIREGRRCDYDDDDADAAGEEDEEATSWLLFDPLKDSSDQGLPPFGDALVADFLNLGGGAGEKEDASSSKDCSSSHGKSSEGSHEFAVPGEPVPERQGFGAVSMDITDYDASNFRRGYSFGASLGHSVSMSSLENMSTVPDCGVPDITTSYLRSSKSTIDLFTAAAGSPVAAHSIMSPPQFMGAIDREARVHRYREKRKTRRFEKTIRYASRKAYAETRPRIKGRFAKRSDTDLEVDQYFSTTADSSCGVVPTF.

Zn(2+)-binding residues include Cys15, Cys18, Cys38, and His43. The segment at 15-57 (CDSCRSAPCAFYCLADSAALCATCDADVHSVNPLARRHRRVPM) adopts a B box-type; atypical zinc-finger fold. Positions 141-179 (AGEKEDASSSKDCSSSHGKSSEGSHEFAVPGEPVPERQG) are disordered. The region spanning 268–310 (REARVHRYREKRKTRRFEKTIRYASRKAYAETRPRIKGRFAKR) is the CCT domain.

It belongs to the CONSTANS family.

The protein resides in the nucleus. Its function is as follows. Probable transcription factor involved in the regulation of flowering time under short day (SD) conditions. Functions as a repressor of flowering under SD conditions, independently of HD1, EHD1, MADS50 and MADS51. Controls flowering time under SD conditions by negatively regulating the expression of HD3A and FTL. In Oryza sativa subsp. japonica (Rice), this protein is Zinc finger protein CO3.